The following is a 371-amino-acid chain: Queuine tRNA-ribosyltransferase (371 aa).

The active-site Proton acceptor is aspartate 90. Substrate contacts are provided by residues 90–94 (DSGGF), aspartate 144, glutamine 189, and glycine 215. Positions 246–252 (GVGTPEN) are RNA binding. The active-site Nucleophile is the aspartate 265. Residues 270-274 (TRNAR) form an RNA binding; important for wobble base 34 recognition region. Cysteine 303, cysteine 305, cysteine 308, and histidine 334 together coordinate Zn(2+).

Belongs to the queuine tRNA-ribosyltransferase family. As to quaternary structure, homodimer. Within each dimer, one monomer is responsible for RNA recognition and catalysis, while the other monomer binds to the replacement base PreQ1. The cofactor is Zn(2+).

It catalyses the reaction 7-aminomethyl-7-carbaguanine + guanosine(34) in tRNA = 7-aminomethyl-7-carbaguanosine(34) in tRNA + guanine. It functions in the pathway tRNA modification; tRNA-queuosine biosynthesis. In terms of biological role, catalyzes the base-exchange of a guanine (G) residue with the queuine precursor 7-aminomethyl-7-deazaguanine (PreQ1) at position 34 (anticodon wobble position) in tRNAs with GU(N) anticodons (tRNA-Asp, -Asn, -His and -Tyr). Catalysis occurs through a double-displacement mechanism. The nucleophile active site attacks the C1' of nucleotide 34 to detach the guanine base from the RNA, forming a covalent enzyme-RNA intermediate. The proton acceptor active site deprotonates the incoming PreQ1, allowing a nucleophilic attack on the C1' of the ribose to form the product. After dissociation, two additional enzymatic reactions on the tRNA convert PreQ1 to queuine (Q), resulting in the hypermodified nucleoside queuosine (7-(((4,5-cis-dihydroxy-2-cyclopenten-1-yl)amino)methyl)-7-deazaguanosine). The sequence is that of Queuine tRNA-ribosyltransferase from Helicobacter pylori (strain J99 / ATCC 700824) (Campylobacter pylori J99).